The primary structure comprises 970 residues: m7GpppN-mRNA hydrolase (970 aa).

Positions Lys101 to Met228 constitute a Nudix hydrolase domain. Ser116 is subject to Phosphoserine. Residues Gly134–Gly155 carry the Nudix box motif. Mn(2+) is bound by residues Glu149 and Glu153. The segment covering Gln302–Gln314 has biased composition (basic and acidic residues). Disordered regions lie at residues Gln302–Lys341, Ala417–Lys465, Ser501–Val520, and Tyr528–Thr692. Residues Lys315–Ser334 show a composition bias toward low complexity. Position 439 is a phosphoserine (Ser439). Residues Tyr528 to Val539 show a composition bias toward acidic residues. Basic and acidic residues predominate over residues Ser560–Ala576. The segment covering Ser577–Val590 has biased composition (polar residues). Positions Lys596–Ser608 are enriched in low complexity. Residues Asp625 to Glu637 show a composition bias toward acidic residues. Position 677 is a phosphothreonine (Thr677). A compositionally biased stretch (polar residues) spans Thr677–Ser691. Residues Ser679, Ser682, Ser751, Ser771, Ser773, and Ser778 each carry the phosphoserine modification. A disordered region spans residues Leu831–Lys867. The span at Ser848 to Gln863 shows a compositional bias: polar residues.

This sequence belongs to the Nudix hydrolase family. DCP2 subfamily. Component of the decapping complex composed of DCP1 and DCP2. Interacts with mRNA, LSM2, LSM4 and LSM8. Interacts with EDC3. Mn(2+) is required as a cofactor.

Its subcellular location is the cytoplasm. The protein localises to the P-body. It catalyses the reaction a 5'-end (N(7)-methyl 5'-triphosphoguanosine)-ribonucleoside in mRNA + H2O = N(7)-methyl-GDP + a 5'-end phospho-ribonucleoside in mRNA + 2 H(+). Catalytic component of the decapping complex necessary for the degradation of mRNAs, both in normal mRNA turnover and in nonsense-mediated mRNA decay. Removes the 7-methyl guanine cap structure from mRNA molecules, yielding a 5'-phosphorylated mRNA fragment and 7m-GDP. Decapping is the major pathway of mRNA degradation in yeast and occurs through deadenylation, decapping and subsequent 5' to 3' exonucleolytic decay of the transcript body. Blocks autophagy in nutrient-rich conditions by repressing the expression of ATG-related genes through degradation of their transcripts. The protein is m7GpppN-mRNA hydrolase of Saccharomyces cerevisiae (strain ATCC 204508 / S288c) (Baker's yeast).